The primary structure comprises 196 residues: Dimiconin (196 aa).

The first 21 residues, 1-21 (MKTIIVVTIFGILTCAYPTDG), serve as a signal peptide directing secretion. 2 N-linked (GlcNAc...) asparagine glycosylation sites follow: Asn62 and Asn187.

It belongs to the calycin superfamily. Triabin family. Salivary gland.

It localises to the secreted. Inhibits the intrinsic blood coagulation pathway by blocking the activation of host coagulation factor XII (F12) but not the enzymatic activity of activated F12. The protein is Dimiconin of Triatoma dimidiata (Kissing bug).